The chain runs to 341 residues: UDP-3-O-(3-hydroxymyristoyl)glucosamine N-acyltransferase (341 aa).

Residue His239 is the Proton acceptor of the active site.

This sequence belongs to the transferase hexapeptide repeat family. LpxD subfamily. As to quaternary structure, homotrimer.

The enzyme catalyses a UDP-3-O-[(3R)-3-hydroxyacyl]-alpha-D-glucosamine + a (3R)-hydroxyacyl-[ACP] = a UDP-2-N,3-O-bis[(3R)-3-hydroxyacyl]-alpha-D-glucosamine + holo-[ACP] + H(+). The catalysed reaction is UDP-3-O-[(3R)-3-hydroxytetradecanoyl]-alpha-D-glucosamine + (3R)-hydroxytetradecanoyl-[ACP] = UDP-2-N,3-O-bis[(3R)-3-hydroxytetradecanoyl]-alpha-D-glucosamine + holo-[ACP] + H(+). The protein operates within glycolipid biosynthesis; lipid IV(A) biosynthesis; lipid IV(A) from (3R)-3-hydroxytetradecanoyl-[acyl-carrier-protein] and UDP-N-acetyl-alpha-D-glucosamine: step 3/6. In terms of biological role, catalyzes the N-acylation of UDP-3-O-(hydroxytetradecanoyl)glucosamine using 3-hydroxytetradecanoyl-ACP as the acyl donor. Is involved in the biosynthesis of lipid A, a phosphorylated glycolipid that anchors the lipopolysaccharide to the outer membrane of the cell. The protein is UDP-3-O-(3-hydroxymyristoyl)glucosamine N-acyltransferase of Escherichia coli O157:H7.